The primary structure comprises 75 residues: Protein SlyX homolog (75 aa).

Belongs to the SlyX family.

The chain is Protein SlyX homolog from Chromobacterium violaceum (strain ATCC 12472 / DSM 30191 / JCM 1249 / CCUG 213 / NBRC 12614 / NCIMB 9131 / NCTC 9757 / MK).